The sequence spans 233 residues: 5'-methylthioadenosine/S-adenosylhomocysteine nucleosidase (233 aa).

The Proton acceptor role is filled by Glu-12. Substrate contacts are provided by residues Gly-78, Ile-152, and 173 to 174 (ME). The active-site Proton donor is the Asp-197.

The protein belongs to the PNP/UDP phosphorylase family. MtnN subfamily. Homodimer.

It carries out the reaction S-adenosyl-L-homocysteine + H2O = S-(5-deoxy-D-ribos-5-yl)-L-homocysteine + adenine. It catalyses the reaction S-methyl-5'-thioadenosine + H2O = 5-(methylsulfanyl)-D-ribose + adenine. The enzyme catalyses 5'-deoxyadenosine + H2O = 5-deoxy-D-ribose + adenine. The protein operates within amino-acid biosynthesis; L-methionine biosynthesis via salvage pathway; S-methyl-5-thio-alpha-D-ribose 1-phosphate from S-methyl-5'-thioadenosine (hydrolase route): step 1/2. Catalyzes the irreversible cleavage of the glycosidic bond in both 5'-methylthioadenosine (MTA) and S-adenosylhomocysteine (SAH/AdoHcy) to adenine and the corresponding thioribose, 5'-methylthioribose and S-ribosylhomocysteine, respectively. Also cleaves 5'-deoxyadenosine, a toxic by-product of radical S-adenosylmethionine (SAM) enzymes, into 5-deoxyribose and adenine. Thus, is required for in vivo function of the radical SAM enzymes biotin synthase and lipoic acid synthase, that are inhibited by 5'-deoxyadenosine accumulation. The chain is 5'-methylthioadenosine/S-adenosylhomocysteine nucleosidase from Yersinia enterocolitica serotype O:8 / biotype 1B (strain NCTC 13174 / 8081).